A 368-amino-acid polypeptide reads, in one-letter code: Carbamoyl phosphate synthase small chain (368 aa).

Positions 1-178 are CPSase; the sequence is MKAVLGLEDG…GAECAWKGSG (178 aa). L-glutamine-binding residues include Ser-45, Gly-230, and Gly-232. One can recognise a Glutamine amidotransferase type-1 domain in the interval 182–368; that stretch reads HAVVVDLGIK…KVVKVLGGDL (187 aa). The Nucleophile role is filled by Cys-257. Residues Phe-258, Gln-261, Asn-299, Gly-301, and Tyr-302 each contribute to the L-glutamine site. Catalysis depends on residues His-342 and Glu-344.

It belongs to the CarA family. As to quaternary structure, composed of two chains; the small (or glutamine) chain promotes the hydrolysis of glutamine to ammonia, which is used by the large (or ammonia) chain to synthesize carbamoyl phosphate. Tetramer of heterodimers (alpha,beta)4.

The catalysed reaction is hydrogencarbonate + L-glutamine + 2 ATP + H2O = carbamoyl phosphate + L-glutamate + 2 ADP + phosphate + 2 H(+). The enzyme catalyses L-glutamine + H2O = L-glutamate + NH4(+). It functions in the pathway amino-acid biosynthesis; L-arginine biosynthesis; carbamoyl phosphate from bicarbonate: step 1/1. The protein operates within pyrimidine metabolism; UMP biosynthesis via de novo pathway; (S)-dihydroorotate from bicarbonate: step 1/3. Its function is as follows. Small subunit of the glutamine-dependent carbamoyl phosphate synthetase (CPSase). CPSase catalyzes the formation of carbamoyl phosphate from the ammonia moiety of glutamine, carbonate, and phosphate donated by ATP, constituting the first step of 2 biosynthetic pathways, one leading to arginine and/or urea and the other to pyrimidine nucleotides. The small subunit (glutamine amidotransferase) binds and cleaves glutamine to supply the large subunit with the substrate ammonia. The chain is Carbamoyl phosphate synthase small chain from Methanosarcina acetivorans (strain ATCC 35395 / DSM 2834 / JCM 12185 / C2A).